A 2078-amino-acid polypeptide reads, in one-letter code: Nascent polypeptide-associated complex subunit alpha, muscle-specific form (2078 aa).

Disordered stretches follow at residues 1–21 (MPGE…QPQA), 37–96 (ALGQ…LGTA), 595–614 (LGEP…PLGV), and 732–1944 (KSVP…KAMS). Polar residues-rich tracts occupy residues 9–21 (VPAT…QPQA) and 60–75 (AANQ…TIAS). Residues 775-786 (SGASATASSKGT) are compositionally biased toward low complexity. Positions 837–847 (PENSLSFQGSK) are enriched in polar residues. A Phosphoserine modification is found at S917. The segment covering 933–1020 (SPSPKGAPTP…PPAVTPPSPK (88 aa)) has biased composition (pro residues). Low complexity predominate over residues 1045–1067 (GSPAATPLPKGAPTTPAATLPSP). The segment covering 1080 to 1113 (PTPPAATPPSPKGGPATPSPKGAPMPPAATPPSP) has biased composition (pro residues). Residues 1114–1130 (KGGLATPPHKGAPTTPA) show a composition bias toward low complexity. Composition is skewed to pro residues over residues 1131–1147 (ATPP…PPKG) and 1154–1170 (ATPP…PPKG). Position 1181 is a phosphoserine (S1181). 3 stretches are compositionally biased toward low complexity: residues 1183–1199 (KGGL…TTPA), 1206–1222 (KGGL…TTPA), and 1229–1245 (KGGL…TTPA). Composition is skewed to pro residues over residues 1246-1270 (ATPP…PAAT) and 1292-1344 (VTPP…PSPK). Low complexity predominate over residues 1345 to 1366 (GTPTLPATTPSSKGGPTTPSSK). Phosphoserine occurs at positions 1397 and 1474. The span at 1470-1481 (VTPPSPKEPPAP) shows a compositional bias: pro residues. Residues 1485 to 1507 (ATSSSPKKAPATPAPMGAPTLPA) are compositionally biased toward low complexity. Residues 1611 to 1625 (KEAPTPPAVTPPSPE) are compositionally biased toward pro residues. A compositionally biased stretch (low complexity) spans 1626–1637 (KGPATPAPKGTP). Polar residues predominate over residues 1647 to 1656 (LKDSPTSPAS). The span at 1744-1756 (DSSKTAKGKDASH) shows a compositional bias: basic and acidic residues. The segment covering 1794–1811 (PSPPVSLPLAPSPVPTLP) has biased composition (pro residues). Positions 1841–1845 (LPLIP) match the PXLXP motif. Polar residues predominate over residues 1876–1891 (SAKQPVTKNNKGSGTE). The span at 1892 to 1905 (SDSDESVPELEEQD) shows a compositional bias: acidic residues. A Phosphoserine; by ILK1 modification is found at S1906. Residues 1907–1920 (TQATTQQAQLAAAA) show a composition bias toward low complexity. Positions 1932-1943 (QSRSEKKARKAM) are required for DNA-binding. An NAC-A/B domain is found at 1933-1998 (SRSEKKARKA…AKIEDLSQQA (66 aa)). The residue at position 1995 (S1995) is a Phosphoserine. Position 2005 is an N6-acetyllysine; alternate (K2005). Residue K2005 forms a Glycyl lysine isopeptide (Lys-Gly) (interchain with G-Cter in SUMO2); alternate linkage. A Phosphothreonine; by GSK3-beta modification is found at T2022. T2024 carries the phosphothreonine modification. Phosphoserine occurs at positions 2029, 2049, 2054, and 2066. The 40-residue stretch at 2039-2078 (VEVKDIELVMSQANVSRAKAVRALKNNSNDIVNAIMELTM) folds into the UBA domain.

Interacts (via PXLXP motif) with the muscle-restricted histone methyltransferase SMYD1 (via MYND-type zinc finger).

Its subcellular location is the cytoplasm. It is found in the nucleus. Functionally, cardiac- and muscle-specific transcription factor. May act to regulate the expression of genes involved in the development of myotubes. Plays a critical role in ventricular cardiomyocyte expansion and regulates postnatal skeletal muscle growth and regeneration. Involved in the organized assembly of thick and thin filaments of myofibril sarcomeres. The chain is Nascent polypeptide-associated complex subunit alpha, muscle-specific form (NACA) from Homo sapiens (Human).